The primary structure comprises 346 residues: RNA polymerase II holoenzyme cyclin-like subunit (346 aa).

Positions 59–158 (NLLIKLGRRL…EMDSYLFLHH (100 aa)) constitute a Cyclin N-terminal domain.

It belongs to the cyclin family. Cyclin C subfamily. Component of the SRB8-11 complex, a regulatory module of the Mediator complex.

The protein resides in the nucleus. Functionally, component of the SRB8-11 complex. The SRB8-11 complex is a regulatory module of the Mediator complex which is itself involved in regulation of basal and activated RNA polymerase II-dependent transcription. The SRB8-11 complex may be involved in the transcriptional repression of a subset of genes regulated by Mediator. It may inhibit the association of the Mediator complex with RNA polymerase II to form the holoenzyme complex. The SRB8-11 complex phosphorylates the C-terminal domain (CTD) of the largest subunit of RNA polymerase II. This Scheffersomyces stipitis (strain ATCC 58785 / CBS 6054 / NBRC 10063 / NRRL Y-11545) (Yeast) protein is RNA polymerase II holoenzyme cyclin-like subunit (SSN8).